The primary structure comprises 333 residues: Anthranilate phosphoribosyltransferase (333 aa).

5-phospho-alpha-D-ribose 1-diphosphate is bound by residues Gly81, 84 to 85 (GD), Thr89, 91 to 94 (NIST), 109 to 117 (KHGNRSVSS), and Ala121. Gly81 provides a ligand contact to anthranilate. A Mg(2+)-binding site is contributed by Ser93. Asn112 is a binding site for anthranilate. Arg167 provides a ligand contact to anthranilate. Residues Asp225 and Glu226 each coordinate Mg(2+).

This sequence belongs to the anthranilate phosphoribosyltransferase family. As to quaternary structure, homodimer. The cofactor is Mg(2+).

It catalyses the reaction N-(5-phospho-beta-D-ribosyl)anthranilate + diphosphate = 5-phospho-alpha-D-ribose 1-diphosphate + anthranilate. The protein operates within amino-acid biosynthesis; L-tryptophan biosynthesis; L-tryptophan from chorismate: step 2/5. Functionally, catalyzes the transfer of the phosphoribosyl group of 5-phosphorylribose-1-pyrophosphate (PRPP) to anthranilate to yield N-(5'-phosphoribosyl)-anthranilate (PRA). This chain is Anthranilate phosphoribosyltransferase, found in Pasteurella multocida (strain Pm70).